The following is a 387-amino-acid chain: Enoyl-[acyl-carrier-protein] reductase 2, mitochondrial (387 aa).

A mitochondrion-targeting transit peptide spans 1–23; the sequence is MYRNQLARASLRSTSSINQIRNM. Y79 serves as the catalytic Proton donor. Residues N172, 199–202, 222–224, 297–300, 322–324, and K382 contribute to the NADP(+) site; these read NSAV, RDR, YGGM, and FWV.

The protein belongs to the zinc-containing alcohol dehydrogenase family. Quinone oxidoreductase subfamily. As to quaternary structure, homodimer.

The protein resides in the mitochondrion matrix. It catalyses the reaction a 2,3-saturated acyl-[ACP] + NADP(+) = a (2E)-enoyl-[ACP] + NADPH + H(+). Functionally, catalyzes the NADPH-dependent reduction of trans-2-enoyl thioesters in mitochondrial fatty acid synthesis (fatty acid synthesis type II). Fatty acid chain elongation in mitochondria uses acyl carrier protein (ACP) as an acyl group carrier, but the enzyme accepts both ACP and CoA thioesters as substrates in vitro. Required for respiration and the maintenance of the mitochondrial compartment. The polypeptide is Enoyl-[acyl-carrier-protein] reductase 2, mitochondrial (ETR2) (Debaryomyces hansenii (strain ATCC 36239 / CBS 767 / BCRC 21394 / JCM 1990 / NBRC 0083 / IGC 2968) (Yeast)).